The primary structure comprises 680 residues: DNA-directed RNA polymerase subunit beta' (680 aa).

Zn(2+) contacts are provided by Cys-69, Cys-71, Cys-87, and Cys-90. Mg(2+) is bound by residues Asp-489, Asp-491, and Asp-493.

Belongs to the RNA polymerase beta' chain family. RpoC1 subfamily. In plastids the minimal PEP RNA polymerase catalytic core is composed of four subunits: alpha, beta, beta', and beta''. When a (nuclear-encoded) sigma factor is associated with the core the holoenzyme is formed, which can initiate transcription. Requires Mg(2+) as cofactor. It depends on Zn(2+) as a cofactor.

It is found in the plastid. The protein localises to the chloroplast. It carries out the reaction RNA(n) + a ribonucleoside 5'-triphosphate = RNA(n+1) + diphosphate. Functionally, DNA-dependent RNA polymerase catalyzes the transcription of DNA into RNA using the four ribonucleoside triphosphates as substrates. The sequence is that of DNA-directed RNA polymerase subunit beta' from Olimarabidopsis pumila (Dwarf rocket).